The following is a 204-amino-acid chain: Thymidylate kinase (204 aa).

An ATP-binding site is contributed by 11–18 (GIDGAGKS).

The protein belongs to the thymidylate kinase family.

It carries out the reaction dTMP + ATP = dTDP + ADP. Its function is as follows. Phosphorylation of dTMP to form dTDP in both de novo and salvage pathways of dTTP synthesis. The protein is Thymidylate kinase of Janthinobacterium sp. (strain Marseille) (Minibacterium massiliensis).